The chain runs to 131 residues: MPRPKPRSPRRRGRPPPAAPPPPPARPRARRYRPGQRALREIRRYQSSTALLLRRQPFARVVREICLLFTRGVDYRWQAMALLALQEAAEAFLVHLLEDAYLCSLHARRVTLYPKDLQLARRLRGLQGEGF.

The segment covering methionine 1–arginine 14 has biased composition (basic residues). Residues methionine 1–arginine 33 are disordered. Over residues proline 15–arginine 26 the composition is skewed to pro residues. An H3-like region spans residues proline 34–phenylalanine 131.

Belongs to the histone H3 family. Component of centromeric nucleosomes, where DNA is wrapped around a histone octamer core. The octamer contains two molecules each of H2A, H2B, CENPA and H4 assembled in one CENPA-H4 heterotetramer and two H2A-H2B heterodimers. CENPA modulates the DNA-binding characteristics of nucleosomes so that protruding DNA ends have higher flexibility than in nucleosomes containing conventional histone H3.

It localises to the nucleus. The protein localises to the chromosome. It is found in the centromere. In terms of biological role, histone H3-like nucleosomal protein that is specifically found in centromeric nucleosomes. Replaces conventional H3 in the nucleosome core of centromeric chromatin that serves as an assembly site for the inner kinetochore. The presence of CENPA subtly modifies the nucleosome structure and the way DNA is wrapped around the nucleosome and gives rise to protruding DNA ends that are less well-ordered and rigid compared to nucleosomes containing histone H3. May serve as an epigenetic mark that propagates centromere identity through replication and cell division. Required for recruitment and assembly of kinetochore proteins, and as a consequence required for progress through mitosis, chromosome segregation and cytokinesis. In Gallus gallus (Chicken), this protein is Histone H3-like centromeric protein A (CENPA).